The following is a 255-amino-acid chain: Acetylglutamate kinase (255 aa).

Residues 40-41, Arg-62, and Asn-153 contribute to the substrate site; that span reads GG.

The protein belongs to the acetylglutamate kinase family. ArgB subfamily.

Its subcellular location is the cytoplasm. The catalysed reaction is N-acetyl-L-glutamate + ATP = N-acetyl-L-glutamyl 5-phosphate + ADP. The protein operates within amino-acid biosynthesis; L-arginine biosynthesis; N(2)-acetyl-L-ornithine from L-glutamate: step 2/4. Its function is as follows. Catalyzes the ATP-dependent phosphorylation of N-acetyl-L-glutamate. The chain is Acetylglutamate kinase from Bacillus cereus (strain AH187).